Here is a 450-residue protein sequence, read N- to C-terminus: Folate synthesis bifunctional protein (450 aa).

Positions 1-166 (MTTWNFVCLG…TFAELAAIYP (166 aa)) are HPPK. The region spanning 180–441 (TQIMGIVNVT…QVEGNRRVLA (262 aa)) is the Pterin-binding domain. The DHPS stretch occupies residues 182–450 (IMGIVNVTDD…AAAAWSGMPV (269 aa)). Asparagine 187 contributes to the Mg(2+) binding site. (7,8-dihydropterin-6-yl)methyl diphosphate contacts are provided by residues threonine 227, aspartate 267, asparagine 287, aspartate 358, lysine 395, and 429-431 (RVH).

The protein in the C-terminal section; belongs to the DHPS family. In the N-terminal section; belongs to the HPPK family. The cofactor is Mg(2+).

It carries out the reaction 6-hydroxymethyl-7,8-dihydropterin + ATP = (7,8-dihydropterin-6-yl)methyl diphosphate + AMP + H(+). The catalysed reaction is (7,8-dihydropterin-6-yl)methyl diphosphate + 4-aminobenzoate = 7,8-dihydropteroate + diphosphate. It participates in cofactor biosynthesis; tetrahydrofolate biosynthesis; 2-amino-4-hydroxy-6-hydroxymethyl-7,8-dihydropteridine diphosphate from 7,8-dihydroneopterin triphosphate: step 4/4. It functions in the pathway cofactor biosynthesis; tetrahydrofolate biosynthesis; 7,8-dihydrofolate from 2-amino-4-hydroxy-6-hydroxymethyl-7,8-dihydropteridine diphosphate and 4-aminobenzoate: step 1/2. This Chlamydia muridarum (strain MoPn / Nigg) protein is Folate synthesis bifunctional protein (folKP).